We begin with the raw amino-acid sequence, 243 residues long: Triosephosphate isomerase (243 aa).

Position 9–11 (9–11 (NWK)) interacts with substrate. The active-site Electrophile is the H96. The active-site Proton acceptor is the E165. Substrate is bound by residues G171, S204, and 225–226 (GG).

Belongs to the triosephosphate isomerase family. In terms of assembly, homodimer.

The protein localises to the cytoplasm. It carries out the reaction D-glyceraldehyde 3-phosphate = dihydroxyacetone phosphate. The protein operates within carbohydrate biosynthesis; gluconeogenesis. It functions in the pathway carbohydrate degradation; glycolysis; D-glyceraldehyde 3-phosphate from glycerone phosphate: step 1/1. In terms of biological role, involved in the gluconeogenesis. Catalyzes stereospecifically the conversion of dihydroxyacetone phosphate (DHAP) to D-glyceraldehyde-3-phosphate (G3P). The protein is Triosephosphate isomerase of Parasynechococcus marenigrum (strain WH8102).